The chain runs to 122 residues: Photosystem II extrinsic protein U (122 aa).

Residues 1 to 30 form the signal peptide; that stretch reads MRWLLSILVRVVLVLCLCFAPLGIPVVARA.

Belongs to the PsbU family. PSII is composed of 1 copy each of membrane proteins PsbA, PsbB, PsbC, PsbD, PsbE, PsbF, PsbH, PsbI, PsbJ, PsbK, PsbL, PsbM, PsbT, PsbX, PsbY, PsbZ, Psb30/Ycf12, peripheral proteins PsbO, CyanoQ (PsbQ), PsbU, PsbV and a large number of cofactors. It forms dimeric complexes.

It is found in the cellular thylakoid membrane. Its function is as follows. One of the extrinsic, lumenal subunits of photosystem II (PSII). PSII is a light-driven water plastoquinone oxidoreductase, using light energy to abstract electrons from H(2)O, generating a proton gradient subsequently used for ATP formation. The extrinsic proteins stabilize the structure of photosystem II oxygen-evolving complex (OEC), the ion environment of oxygen evolution and protect the OEC against heat-induced inactivation. This Synechococcus sp. (strain JA-2-3B'a(2-13)) (Cyanobacteria bacterium Yellowstone B-Prime) protein is Photosystem II extrinsic protein U.